We begin with the raw amino-acid sequence, 887 residues long: UPF0182 protein CTC_00086 (887 aa).

7 helical membrane-spanning segments follow: residues 9–29, 47–67, 87–107, 146–166, 195–215, 242–262, and 266–286; these read FIAI…SFII, FFTI…SIWL, LMIA…SSKY, VLIL…YFII, GKQL…GYII, IYRI…ISII, and IKPI…EGAT.

The protein belongs to the UPF0182 family.

Its subcellular location is the cell membrane. The sequence is that of UPF0182 protein CTC_00086 from Clostridium tetani (strain Massachusetts / E88).